The following is a 781-amino-acid chain: Ubiquitin carboxyl-terminal hydrolase 14 (781 aa).

Residues 169 to 279 (STCPHTENFQ…SALQIYGINI (111 aa)) form a UBP-type zinc finger. Zn(2+)-binding residues include C171, H173, C192, C195, C204, C207, C212, H224, H228, H235, C253, and C256. The USP domain occupies 323–781 (CGLINLGNSC…NGYIYFYTRC (459 aa)). The active-site Nucleophile is the C332. 2 consecutive UBA domains span residues 576-626 (DEDE…LFQH) and 649-689 (EVDE…VFNN). H737 (proton acceptor) is an active-site residue.

This sequence belongs to the peptidase C19 family.

The protein localises to the cytoplasm. The protein resides in the nucleus. It carries out the reaction Thiol-dependent hydrolysis of ester, thioester, amide, peptide and isopeptide bonds formed by the C-terminal Gly of ubiquitin (a 76-residue protein attached to proteins as an intracellular targeting signal).. Its function is as follows. Required for the adaptation to the presence of glucose in the growth medium; mediates the degradation of enzymes involved in gluconeogenesis when cells are shifted to glucose-containing medium. Required for proteasome-dependent catabolite degradation of fructose-1,6-bisphosphatase (FBP1). Accelerates proteasomal breakdown of ubiquitinated proteins as it disassembles free ubiquitin chains that would compete with ubiquitinated proteins to bind to the proteasome. In Saccharomyces cerevisiae (strain ATCC 204508 / S288c) (Baker's yeast), this protein is Ubiquitin carboxyl-terminal hydrolase 14 (UBP14).